A 121-amino-acid polypeptide reads, in one-letter code: Putative inactive aspartokinase 3 HI_1632 (121 aa).

Belongs to the aspartokinase family.

The protein is Putative inactive aspartokinase 3 HI_1632 of Haemophilus influenzae (strain ATCC 51907 / DSM 11121 / KW20 / Rd).